Consider the following 233-residue polypeptide: Large ribosomal subunit protein uL1 (233 aa).

Belongs to the universal ribosomal protein uL1 family. In terms of assembly, part of the 50S ribosomal subunit.

Functionally, binds directly to 23S rRNA. Forms the L1 stalk. Unlike the case in the Thermus thermophilus 70S ribosome, this protein is not seen to block the exit path of the E site tRNA. It is clear that the protein in the structure is flexible however, so this is probably due to its position in these crystals. In terms of biological role, protein L1 is also a translational repressor protein, it controls the translation of the L11 operon by binding to its mRNA. The protein is Large ribosomal subunit protein uL1 (rplA) of Deinococcus radiodurans (strain ATCC 13939 / DSM 20539 / JCM 16871 / CCUG 27074 / LMG 4051 / NBRC 15346 / NCIMB 9279 / VKM B-1422 / R1).